Reading from the N-terminus, the 170-residue chain is Ribosome maturation factor RimM (170 aa).

One can recognise a PRC barrel domain in the interval 92-163 (KEGWYYFELE…RMDVELPPGL (72 aa)).

This sequence belongs to the RimM family. As to quaternary structure, binds ribosomal protein uS19.

It localises to the cytoplasm. Its function is as follows. An accessory protein needed during the final step in the assembly of 30S ribosomal subunit, possibly for assembly of the head region. Essential for efficient processing of 16S rRNA. May be needed both before and after RbfA during the maturation of 16S rRNA. It has affinity for free ribosomal 30S subunits but not for 70S ribosomes. The chain is Ribosome maturation factor RimM from Desulfitobacterium hafniense (strain Y51).